The chain runs to 494 residues: Probable cytosol aminopeptidase (494 aa).

Residues Lys-260 and Asp-265 each coordinate Mn(2+). Lys-272 is a catalytic residue. Positions 283, 342, and 344 each coordinate Mn(2+). Arg-346 is a catalytic residue.

It belongs to the peptidase M17 family. It depends on Mn(2+) as a cofactor.

It localises to the cytoplasm. It carries out the reaction Release of an N-terminal amino acid, Xaa-|-Yaa-, in which Xaa is preferably Leu, but may be other amino acids including Pro although not Arg or Lys, and Yaa may be Pro. Amino acid amides and methyl esters are also readily hydrolyzed, but rates on arylamides are exceedingly low.. It catalyses the reaction Release of an N-terminal amino acid, preferentially leucine, but not glutamic or aspartic acids.. Its function is as follows. Presumably involved in the processing and regular turnover of intracellular proteins. Catalyzes the removal of unsubstituted N-terminal amino acids from various peptides. This Bacillus cereus (strain ZK / E33L) protein is Probable cytosol aminopeptidase.